A 476-amino-acid chain; its full sequence is Glutamyl-tRNA(Gln) amidotransferase subunit A (476 aa).

Residues Lys69 and Ser144 each act as charge relay system in the active site. Residue Ser168 is the Acyl-ester intermediate of the active site.

It belongs to the amidase family. GatA subfamily. As to quaternary structure, heterotrimer of A, B and C subunits.

The enzyme catalyses L-glutamyl-tRNA(Gln) + L-glutamine + ATP + H2O = L-glutaminyl-tRNA(Gln) + L-glutamate + ADP + phosphate + H(+). In terms of biological role, allows the formation of correctly charged Gln-tRNA(Gln) through the transamidation of misacylated Glu-tRNA(Gln) in organisms which lack glutaminyl-tRNA synthetase. The reaction takes place in the presence of glutamine and ATP through an activated gamma-phospho-Glu-tRNA(Gln). The chain is Glutamyl-tRNA(Gln) amidotransferase subunit A from Sulfolobus acidocaldarius (strain ATCC 33909 / DSM 639 / JCM 8929 / NBRC 15157 / NCIMB 11770).